Here is a 90-residue protein sequence, read N- to C-terminus: uncharacterized protein (90 aa).

A helical membrane pass occupies residues 69-89; the sequence is LLYIFLGAMIVIIFLVIKNQL.

This sequence belongs to the IIV-6 466R family.

The protein resides in the membrane. This is an uncharacterized protein from Invertebrate iridescent virus 6 (IIV-6).